A 450-amino-acid chain; its full sequence is 3-phosphoshikimate 1-carboxyvinyltransferase (450 aa).

The interval 1–25 (MSAHGDPKPMTARKGGALTGTAEVP) is disordered. Residues Lys-28, Ser-29, and Arg-33 each coordinate 3-phosphoshikimate. Lys-28 is a phosphoenolpyruvate binding site. Phosphoenolpyruvate contacts are provided by Gly-101 and Arg-129. Residues Ser-174, Gln-176, Asp-327, and Lys-354 each coordinate 3-phosphoshikimate. Gln-176 is a binding site for phosphoenolpyruvate. The active-site Proton acceptor is Asp-327. Residues Arg-358 and Arg-403 each contribute to the phosphoenolpyruvate site.

This sequence belongs to the EPSP synthase family. As to quaternary structure, monomer.

The protein localises to the cytoplasm. The enzyme catalyses 3-phosphoshikimate + phosphoenolpyruvate = 5-O-(1-carboxyvinyl)-3-phosphoshikimate + phosphate. It participates in metabolic intermediate biosynthesis; chorismate biosynthesis; chorismate from D-erythrose 4-phosphate and phosphoenolpyruvate: step 6/7. Catalyzes the transfer of the enolpyruvyl moiety of phosphoenolpyruvate (PEP) to the 5-hydroxyl of shikimate-3-phosphate (S3P) to produce enolpyruvyl shikimate-3-phosphate and inorganic phosphate. The chain is 3-phosphoshikimate 1-carboxyvinyltransferase from Jannaschia sp. (strain CCS1).